A 288-amino-acid chain; its full sequence is uncharacterized protein (288 aa).

A run of 4 helical transmembrane segments spans residues 43-63 (LFTL…NYII), 190-210 (LFIF…FLLE), 243-263 (GIPI…SILI), and 265-285 (LLQM…NKSL).

It localises to the cell membrane. This is an uncharacterized protein from Rickettsia prowazekii (strain Madrid E).